The chain runs to 290 residues: Small ribosomal subunit biogenesis GTPase RsgA (290 aa).

A CP-type G domain is found at 61-218; that stretch reads SSELLRPAVA…IVDTPGFSTL (158 aa). GTP-binding positions include 110 to 113 and 161 to 169; these read NKVD and GPSGAGKST. Zn(2+)-binding residues include cysteine 243, cysteine 248, histidine 250, and cysteine 256.

This sequence belongs to the TRAFAC class YlqF/YawG GTPase family. RsgA subfamily. Monomer. Associates with 30S ribosomal subunit, binds 16S rRNA. Requires Zn(2+) as cofactor.

It localises to the cytoplasm. Functionally, one of several proteins that assist in the late maturation steps of the functional core of the 30S ribosomal subunit. Helps release RbfA from mature subunits. May play a role in the assembly of ribosomal proteins into the subunit. Circularly permuted GTPase that catalyzes slow GTP hydrolysis, GTPase activity is stimulated by the 30S ribosomal subunit. This is Small ribosomal subunit biogenesis GTPase RsgA from Clostridium botulinum (strain Eklund 17B / Type B).